Reading from the N-terminus, the 518-residue chain is Arp2/3 complex-activating protein rickA (518 aa).

Positions 310–518 (SAAQLQSAET…ERNAKQSQQR (209 aa)) are disordered. Pro residues-rich tracts occupy residues 344–354 (TPPPAPPPPMP) and 382–401 (VPPP…PPPV). Residues 418-430 (QPRPAVDTTNLMK) show a composition bias toward polar residues. The 18-residue stretch at 424 to 441 (DTTNLMKQIQGGFNLKKI) folds into the WH2 domain. A compositionally biased stretch (basic and acidic residues) spans 439–461 (KKIEYGEDGKPIPKNKEDTKETS). Residues 488–498 (GTDSGWASDVS) are compositionally biased toward polar residues.

As to quaternary structure, homodimer.

It is found in the cell surface. Functionally, recruits and activates the Arp2/3 complex, which in turn leads to actin polymerization, promoting Rickettsia motility during infection. The polypeptide is Arp2/3 complex-activating protein rickA (rickA) (Rickettsia bellii (strain RML369-C)).